The sequence spans 330 residues: 4-hydroxythreonine-4-phosphate dehydrogenase (330 aa).

Positions 136 and 137 each coordinate substrate. A divalent metal cation is bound by residues H166, H211, and H266. The substrate site is built by K274, N283, and R292.

This sequence belongs to the PdxA family. Homodimer. Requires Zn(2+) as cofactor. Mg(2+) is required as a cofactor. The cofactor is Co(2+).

The protein localises to the cytoplasm. It carries out the reaction 4-(phosphooxy)-L-threonine + NAD(+) = 3-amino-2-oxopropyl phosphate + CO2 + NADH. It functions in the pathway cofactor biosynthesis; pyridoxine 5'-phosphate biosynthesis; pyridoxine 5'-phosphate from D-erythrose 4-phosphate: step 4/5. Its function is as follows. Catalyzes the NAD(P)-dependent oxidation of 4-(phosphooxy)-L-threonine (HTP) into 2-amino-3-oxo-4-(phosphooxy)butyric acid which spontaneously decarboxylates to form 3-amino-2-oxopropyl phosphate (AHAP). This is 4-hydroxythreonine-4-phosphate dehydrogenase from Sodalis glossinidius (strain morsitans).